The chain runs to 156 residues: MSRRKIPIKRSPKPDSIYRSRLVNMMVNRILKNGKKSLASHILYNAMKEIKHKTKKNPSLILRQAVVRATPKITIKARRIGGSNYQVPVEIKPEKGHSLAIRWLLTASRKRTGKNMVFKLANELLDAAKDTGGAIRKKEETHRMAEANRAFAHFRY.

The protein belongs to the universal ribosomal protein uS7 family. As to quaternary structure, part of the 30S ribosomal subunit.

It is found in the plastid. It localises to the chloroplast. Functionally, one of the primary rRNA binding proteins, it binds directly to 16S rRNA where it nucleates assembly of the head domain of the 30S subunit. The sequence is that of Small ribosomal subunit protein uS7c (rps7) from Chara vulgaris (Common stonewort).